The following is a 331-amino-acid chain: C-type lectin domain family 4 member K (331 aa).

At 1–41 (MPEAEMKEEAPEAHFTVDKQNISLWPREPPPKQDLSPVLRK) the chain is on the cytoplasmic side. A helical; Signal-anchor for type II membrane protein transmembrane segment spans residues 42–62 (PLCICVAFTCLALVLVTSIVL). The Extracellular portion of the chain corresponds to 63 to 331 (QAVFYPRLMG…CKRPYVQTTE (269 aa)). 2 N-linked (GlcNAc...) asparagine glycosylation sites follow: asparagine 90 and asparagine 116. Residues 106–197 (DDAEVQMQIV…LKQQSDILEM (92 aa)) adopt a coiled-coil conformation. One can recognise a C-type lectin domain in the interval 205-323 (FSGNFYYFSR…CDNTFLFICK (119 aa)). 2 disulfide bridges follow: cysteine 226–cysteine 322 and cysteine 298–cysteine 314.

Homotrimer. In terms of tissue distribution, expressed by Langerhans cells. Expressed in dendritic cells and by scattered cells in lymph nodes and spleen. Also detected in some non-lymphoid tissues such as lung, liver and heart.

The protein localises to the membrane. Calcium-dependent lectin displaying mannose-binding specificity. Induces the formation of Birbeck granules (BGs); is a potent regulator of membrane superimposition and zippering. Binds to sulfated as well as mannosylated glycans, keratan sulfate (KS) and beta-glucans. Facilitates uptake of antigens and is involved in the routing and/or processing of antigen for presentation to T cells. The sequence is that of C-type lectin domain family 4 member K (Cd207) from Mus musculus (Mouse).